A 244-amino-acid polypeptide reads, in one-letter code: Probable ABC transporter ATP-binding protein p29 (244 aa).

In terms of domain architecture, ABC transporter spans 6–241 (LVFDQVSLRY…KLTKQKLMQI (236 aa)). 38 to 45 (GKSGVGKT) contributes to the ATP binding site.

Belongs to the ABC transporter superfamily.

In terms of biological role, part of a high-affinity transport system. This Mycoplasma pneumoniae (strain ATCC 29342 / M129 / Subtype 1) (Mycoplasmoides pneumoniae) protein is Probable ABC transporter ATP-binding protein p29 (p29).